Here is a 294-residue protein sequence, read N- to C-terminus: 4-hydroxy-tetrahydrodipicolinate synthase (294 aa).

Thr47 is a pyruvate binding site. Tyr135 functions as the Proton donor/acceptor in the catalytic mechanism. The Schiff-base intermediate with substrate role is filled by Lys163. Thr205 contributes to the pyruvate binding site.

This sequence belongs to the DapA family. Homotetramer; dimer of dimers.

The protein localises to the cytoplasm. It catalyses the reaction L-aspartate 4-semialdehyde + pyruvate = (2S,4S)-4-hydroxy-2,3,4,5-tetrahydrodipicolinate + H2O + H(+). It functions in the pathway amino-acid biosynthesis; L-lysine biosynthesis via DAP pathway; (S)-tetrahydrodipicolinate from L-aspartate: step 3/4. Its function is as follows. Catalyzes the condensation of (S)-aspartate-beta-semialdehyde [(S)-ASA] and pyruvate to 4-hydroxy-tetrahydrodipicolinate (HTPA). The polypeptide is 4-hydroxy-tetrahydrodipicolinate synthase (Rickettsia africae (strain ESF-5)).